The sequence spans 314 residues: 4-hydroxy-3-methylbut-2-enyl diphosphate reductase (314 aa).

Cysteine 12 is a [4Fe-4S] cluster binding site. Positions 41 and 74 each coordinate (2E)-4-hydroxy-3-methylbut-2-enyl diphosphate. The dimethylallyl diphosphate site is built by histidine 41 and histidine 74. Histidine 41 and histidine 74 together coordinate isopentenyl diphosphate. Position 96 (cysteine 96) interacts with [4Fe-4S] cluster. Histidine 124 contributes to the (2E)-4-hydroxy-3-methylbut-2-enyl diphosphate binding site. Position 124 (histidine 124) interacts with dimethylallyl diphosphate. Histidine 124 contributes to the isopentenyl diphosphate binding site. Glutamate 126 serves as the catalytic Proton donor. Threonine 167 contributes to the (2E)-4-hydroxy-3-methylbut-2-enyl diphosphate binding site. Residue cysteine 197 coordinates [4Fe-4S] cluster. Positions 225, 226, 227, and 269 each coordinate (2E)-4-hydroxy-3-methylbut-2-enyl diphosphate. Positions 225, 226, 227, and 269 each coordinate dimethylallyl diphosphate. Residues serine 225, serine 226, asparagine 227, and serine 269 each contribute to the isopentenyl diphosphate site.

Belongs to the IspH family. It depends on [4Fe-4S] cluster as a cofactor.

It catalyses the reaction isopentenyl diphosphate + 2 oxidized [2Fe-2S]-[ferredoxin] + H2O = (2E)-4-hydroxy-3-methylbut-2-enyl diphosphate + 2 reduced [2Fe-2S]-[ferredoxin] + 2 H(+). The catalysed reaction is dimethylallyl diphosphate + 2 oxidized [2Fe-2S]-[ferredoxin] + H2O = (2E)-4-hydroxy-3-methylbut-2-enyl diphosphate + 2 reduced [2Fe-2S]-[ferredoxin] + 2 H(+). It participates in isoprenoid biosynthesis; dimethylallyl diphosphate biosynthesis; dimethylallyl diphosphate from (2E)-4-hydroxy-3-methylbutenyl diphosphate: step 1/1. Its pathway is isoprenoid biosynthesis; isopentenyl diphosphate biosynthesis via DXP pathway; isopentenyl diphosphate from 1-deoxy-D-xylulose 5-phosphate: step 6/6. Functionally, catalyzes the conversion of 1-hydroxy-2-methyl-2-(E)-butenyl 4-diphosphate (HMBPP) into a mixture of isopentenyl diphosphate (IPP) and dimethylallyl diphosphate (DMAPP). Acts in the terminal step of the DOXP/MEP pathway for isoprenoid precursor biosynthesis. This chain is 4-hydroxy-3-methylbut-2-enyl diphosphate reductase, found in Haemophilus ducreyi (strain 35000HP / ATCC 700724).